A 256-amino-acid polypeptide reads, in one-letter code: Thiazole synthase (256 aa).

Residue Lys-95 is the Schiff-base intermediate with DXP of the active site. Residues Gly-156, 182 to 183 (AG), and 204 to 205 (NT) contribute to the 1-deoxy-D-xylulose 5-phosphate site.

This sequence belongs to the ThiG family. Homotetramer. Forms heterodimers with either ThiH or ThiS.

The protein localises to the cytoplasm. The catalysed reaction is [ThiS sulfur-carrier protein]-C-terminal-Gly-aminoethanethioate + 2-iminoacetate + 1-deoxy-D-xylulose 5-phosphate = [ThiS sulfur-carrier protein]-C-terminal Gly-Gly + 2-[(2R,5Z)-2-carboxy-4-methylthiazol-5(2H)-ylidene]ethyl phosphate + 2 H2O + H(+). The protein operates within cofactor biosynthesis; thiamine diphosphate biosynthesis. In terms of biological role, catalyzes the rearrangement of 1-deoxy-D-xylulose 5-phosphate (DXP) to produce the thiazole phosphate moiety of thiamine. Sulfur is provided by the thiocarboxylate moiety of the carrier protein ThiS. In vitro, sulfur can be provided by H(2)S. The chain is Thiazole synthase from Escherichia coli O45:K1 (strain S88 / ExPEC).